A 599-amino-acid polypeptide reads, in one-letter code: Elongation factor 4 (599 aa).

One can recognise a tr-type G domain in the interval 2–184 (KNIRNFSIIA…RLVRDIPPPE (183 aa)). Residues 14-19 (DHGKST) and 131-134 (NKID) contribute to the GTP site.

It belongs to the TRAFAC class translation factor GTPase superfamily. Classic translation factor GTPase family. LepA subfamily.

The protein resides in the cell inner membrane. The catalysed reaction is GTP + H2O = GDP + phosphate + H(+). Functionally, required for accurate and efficient protein synthesis under certain stress conditions. May act as a fidelity factor of the translation reaction, by catalyzing a one-codon backward translocation of tRNAs on improperly translocated ribosomes. Back-translocation proceeds from a post-translocation (POST) complex to a pre-translocation (PRE) complex, thus giving elongation factor G a second chance to translocate the tRNAs correctly. Binds to ribosomes in a GTP-dependent manner. This is Elongation factor 4 from Escherichia coli (strain SE11).